Reading from the N-terminus, the 591-residue chain is V-type ATP synthase alpha chain (591 aa).

233–240 (GPFGAGKT) serves as a coordination point for ATP.

The protein belongs to the ATPase alpha/beta chains family.

It catalyses the reaction ATP + H2O + 4 H(+)(in) = ADP + phosphate + 5 H(+)(out). In terms of biological role, produces ATP from ADP in the presence of a proton gradient across the membrane. The V-type alpha chain is a catalytic subunit. The polypeptide is V-type ATP synthase alpha chain (Streptococcus pyogenes serotype M28 (strain MGAS6180)).